Consider the following 88-residue polypeptide: UPF0147 protein Ta0600 (88 aa).

The protein belongs to the UPF0147 family.

This is UPF0147 protein Ta0600 from Thermoplasma acidophilum (strain ATCC 25905 / DSM 1728 / JCM 9062 / NBRC 15155 / AMRC-C165).